The sequence spans 301 residues: Glycine--tRNA ligase alpha subunit (301 aa).

This sequence belongs to the class-II aminoacyl-tRNA synthetase family. As to quaternary structure, tetramer of two alpha and two beta subunits.

The protein localises to the cytoplasm. It catalyses the reaction tRNA(Gly) + glycine + ATP = glycyl-tRNA(Gly) + AMP + diphosphate. In Glaesserella parasuis serovar 5 (strain SH0165) (Haemophilus parasuis), this protein is Glycine--tRNA ligase alpha subunit.